The chain runs to 437 residues: Enolase superfamily member DDB_G0284701 (437 aa).

Catalysis depends on Lys217, which acts as the Proton acceptor. The Mn(2+) site is built by Asp251, Glu279, and Asp321. Asp395 acts as the Proton donor in catalysis.

It belongs to the mandelate racemase/muconate lactonizing enzyme family.

The polypeptide is Enolase superfamily member DDB_G0284701 (Dictyostelium discoideum (Social amoeba)).